We begin with the raw amino-acid sequence, 65 residues long: uncharacterized protein (65 aa).

The interval 24–65 (NNNNNNNNNNNNNNNNNNNNNNNNNNNNNNNKNNKNNNKNND) is disordered.

This is an uncharacterized protein from Dictyostelium discoideum (Social amoeba).